The primary structure comprises 342 residues: Uroporphyrinogen decarboxylase (342 aa).

Substrate contacts are provided by residues 26–30 (RQAGR), D76, Y150, S205, and H321.

This sequence belongs to the uroporphyrinogen decarboxylase family. In terms of assembly, homodimer.

It is found in the cytoplasm. The catalysed reaction is uroporphyrinogen III + 4 H(+) = coproporphyrinogen III + 4 CO2. The protein operates within porphyrin-containing compound metabolism; protoporphyrin-IX biosynthesis; coproporphyrinogen-III from 5-aminolevulinate: step 4/4. In terms of biological role, catalyzes the decarboxylation of four acetate groups of uroporphyrinogen-III to yield coproporphyrinogen-III. This chain is Uroporphyrinogen decarboxylase, found in Sphingopyxis alaskensis (strain DSM 13593 / LMG 18877 / RB2256) (Sphingomonas alaskensis).